We begin with the raw amino-acid sequence, 140 residues long: MPTINQLVRKGRYVEEYKSTAPALQKGMNTLRKKATDISAPQKRGVCTSVKTVTPKKPNSALRKVARVRLTNGIEVTAYIPGIGHNLQEHSVVLIRGGRVKDLPGVRYHIVRGALDTAGVANRQQSRSKYGAKKPKAAKK.

3-methylthioaspartic acid is present on D102. The disordered stretch occupies residues 121-140 (ANRQQSRSKYGAKKPKAAKK). Residues 130-140 (YGAKKPKAAKK) are compositionally biased toward basic residues.

This sequence belongs to the universal ribosomal protein uS12 family. Part of the 30S ribosomal subunit. Contacts proteins S8 and S17. May interact with IF1 in the 30S initiation complex.

Functionally, with S4 and S5 plays an important role in translational accuracy. Its function is as follows. Interacts with and stabilizes bases of the 16S rRNA that are involved in tRNA selection in the A site and with the mRNA backbone. Located at the interface of the 30S and 50S subunits, it traverses the body of the 30S subunit contacting proteins on the other side and probably holding the rRNA structure together. The combined cluster of proteins S8, S12 and S17 appears to hold together the shoulder and platform of the 30S subunit. This Alkaliphilus oremlandii (strain OhILAs) (Clostridium oremlandii (strain OhILAs)) protein is Small ribosomal subunit protein uS12.